The primary structure comprises 282 residues: Elongation factor Ts (282 aa).

The involved in Mg(2+) ion dislocation from EF-Tu stretch occupies residues 79–82; that stretch reads TDFV.

It belongs to the EF-Ts family.

It localises to the cytoplasm. Associates with the EF-Tu.GDP complex and induces the exchange of GDP to GTP. It remains bound to the aminoacyl-tRNA.EF-Tu.GTP complex up to the GTP hydrolysis stage on the ribosome. The polypeptide is Elongation factor Ts (Shewanella sediminis (strain HAW-EB3)).